The primary structure comprises 222 residues: 7-cyano-7-deazaguanine synthase (222 aa).

8–18 (LSGGLDSTTCL) serves as a coordination point for ATP. The Zn(2+) site is built by C186, C194, C197, and C200.

Belongs to the QueC family. In terms of assembly, homodimer. Zn(2+) is required as a cofactor.

The catalysed reaction is 7-carboxy-7-deazaguanine + NH4(+) + ATP = 7-cyano-7-deazaguanine + ADP + phosphate + H2O + H(+). It participates in purine metabolism; 7-cyano-7-deazaguanine biosynthesis. In terms of biological role, catalyzes the ATP-dependent conversion of 7-carboxy-7-deazaguanine (CDG) to 7-cyano-7-deazaguanine (preQ(0)). This Acetivibrio thermocellus (strain ATCC 27405 / DSM 1237 / JCM 9322 / NBRC 103400 / NCIMB 10682 / NRRL B-4536 / VPI 7372) (Clostridium thermocellum) protein is 7-cyano-7-deazaguanine synthase.